The primary structure comprises 513 residues: rRNA N(6)-adenosine-methyltransferase ZCCHC4 (513 aa).

Zn(2+)-binding residues include C40, H42, C64, C73, C125, C128, H140, and H143. The segment at 40-82 (CPHGPTLLFVKVTQGKEETRRFYACSACRDRKDCNFFQWEDEK) adopts a GRF-type zinc-finger fold. S-adenosyl-L-methionine-binding positions include 172–175 (QYLF), R202, D225, 243–244 (NM), and D276. Residues 337-357 (QVDYDNHALYKHGKTGRKQSP) form a regulatory loop region. Positions 380, 383, 393, 394, 397, 400, 410, 411, 414, 417, 424, 425, 428, 431, 436, and 438 each coordinate Zn(2+). Positions 395–447 (ELCNSCTSKDGRKWNHCFLCKKCVKPSWIHCSICNHCAVPDHSCEGPKHGCFI) constitute a DHHC domain. Residues 443–460 (HGCFICGELDHKRSTCPN) form a CCHC-type zinc finger. Over residues 466–481 (RANKAVRKQKQRKSNK) the composition is skewed to basic residues. The interval 466–513 (RANKAVRKQKQRKSNKMKMETTKGQSMNHTSATRRKKRRERAHQYLGS) is disordered. The span at 487–496 (TKGQSMNHTS) shows a compositional bias: polar residues. The span at 497-506 (ATRRKKRRER) shows a compositional bias: basic residues.

The protein belongs to the ZCCHC4 family. In terms of assembly, interacts with components of the ASC-1 complex TRIP4, ASCC1, ASCC2 and ASCC3. Interact with AHCYL1 and AHCYL2. Interact with YTHDC2.

Its subcellular location is the nucleus. The protein resides in the nucleolus. The protein localises to the cytoplasm. It catalyses the reaction adenosine(4220) in 28S rRNA + S-adenosyl-L-methionine = N(6)-methyladenosine(4220) in 28S rRNA + S-adenosyl-L-homocysteine + H(+). Its function is as follows. rRNA N6-methyltransferase that specifically methylates the adenine in position 4220 of 28S rRNA. N6-methylation of adenine(4220) in 28S rRNA is required for translation. This Homo sapiens (Human) protein is rRNA N(6)-adenosine-methyltransferase ZCCHC4.